The following is a 72-amino-acid chain: MSKEEVLEFSGIVTELLPNAMFRVKLENDHEIIAHTAGRMRKNRIRVLAGDKIMVEMTPYDLTKGRITYRYK.

The S1-like domain maps to 1-72 (MSKEEVLEFS…TKGRITYRYK (72 aa)).

This sequence belongs to the IF-1 family. Component of the 30S ribosomal translation pre-initiation complex which assembles on the 30S ribosome in the order IF-2 and IF-3, IF-1 and N-formylmethionyl-tRNA(fMet); mRNA recruitment can occur at any time during PIC assembly.

Its subcellular location is the cytoplasm. Functionally, one of the essential components for the initiation of protein synthesis. Stabilizes the binding of IF-2 and IF-3 on the 30S subunit to which N-formylmethionyl-tRNA(fMet) subsequently binds. Helps modulate mRNA selection, yielding the 30S pre-initiation complex (PIC). Upon addition of the 50S ribosomal subunit IF-1, IF-2 and IF-3 are released leaving the mature 70S translation initiation complex. The sequence is that of Translation initiation factor IF-1 from Bartonella quintana (strain Toulouse) (Rochalimaea quintana).